The chain runs to 151 residues: MNPLRKKRLLIILAILVGVGIAVGLALSALKENINLFYTPTQIANGEAPLDTRIRAGGMVQAGSLQRSADSLDVKFVVTDFNKSVTITYRGILPDLFREGQGIVALGKLNADGVVVADEVLAKHDEKYMPPEVTKALKDSGQSAPTPAKEG.

Residues Met-1 to Arg-8 are Cytoplasmic-facing. Residues Leu-9–Ala-29 traverse the membrane as a helical; Signal-anchor for type II membrane protein segment. Over Leu-30–Gly-151 the chain is Periplasmic. Residues His-124 and Tyr-128 each contribute to the heme site. The tract at residues Pro-131–Gly-151 is disordered.

Belongs to the CcmE/CycJ family.

Its subcellular location is the cell inner membrane. Heme chaperone required for the biogenesis of c-type cytochromes. Transiently binds heme delivered by CcmC and transfers the heme to apo-cytochromes in a process facilitated by CcmF and CcmH. This Pseudomonas fluorescens (strain ATCC BAA-477 / NRRL B-23932 / Pf-5) protein is Cytochrome c-type biogenesis protein CcmE.